Here is a 444-residue protein sequence, read N- to C-terminus: Multidrug resistance protein MdtA (444 aa).

The first 20 residues, 1–20, serve as a signal peptide directing secretion; the sequence is MKSQSKRTSRLFVFVGVVVA. Residues 37-52 show a composition bias toward polar residues; the sequence is NNTSGAQQSARGQDTS. Disordered regions lie at residues 37–60 and 398–444; these read NNTS…RNTP and TPRS…AEKS. The span at 409 to 419 shows a compositional bias: low complexity; it reads ASAEKAAAEAE. The span at 435–444 shows a compositional bias: polar residues; sequence ARSTTAAEKS.

Belongs to the membrane fusion protein (MFP) (TC 8.A.1) family. As to quaternary structure, part of a tripartite efflux system composed of MdtA, MdtB and MdtC.

It localises to the cell inner membrane. The protein is Multidrug resistance protein MdtA of Yersinia pseudotuberculosis serotype O:3 (strain YPIII).